Consider the following 515-residue polypeptide: N-acetylglucosamine-1-phosphodiester alpha-N-acetylglucosaminidase (515 aa).

The N-terminal stretch at 1–25 is a signal peptide; sequence MATSTGRWLLLRLALFGFLWEASGG. Residues 26–49 constitute a propeptide, removed in mature form; it reads LDSGASRDDDLLLPYPRARARLPR. Residues 50 to 448 lie on the Lumenal side of the membrane; that stretch reads DCTRVRAGNR…AGELSFFTRT (399 aa). Cystine bridges form between Cys115/Cys148, Cys132/Cys323, Cys307/Cys314, Cys362/Cys373, and Cys380/Cys389. N-linked (GlcNAc...) asparagine glycans are attached at residues Asn208, Asn214, and Asn296. Residues 358–390 form the EGF-like domain; the sequence is DELDCGPSNCSQHGLCTETGCRCDAGWTGSNCS. N-linked (GlcNAc...) asparagine glycosylation is found at Asn366, Asn388, and Asn420. A helical membrane pass occupies residues 449-469; sequence AWLALTLALAFLLLISTAANL. Topologically, residues 470-515 are cytoplasmic; the sequence is SLLLSRAERNRRLHGDYAYHPLQEMNGEPLAAEKEQPGGAHNPFKD. The mediates the interaction with AP4M1 stretch occupies residues 486–493; sequence YAYHPLQE. The Tyrosine-based internalization motif motif lies at 488 to 491; the sequence is YHPL. The NPF internalization motif motif lies at 511-515; the sequence is NPFKD.

In terms of assembly, homotetramer arranged as two disulfide-linked homodimers. Interacts with AP4M1. The precursor is cleaved and activated in the trans-Golgi network by a furin endopeptidase. Isoform 2 may be brain-specific.

The protein localises to the golgi apparatus. Its subcellular location is the golgi stack membrane. It is found in the trans-Golgi network. It carries out the reaction N(4)-[6-(N-acetyl-alpha-D-glucosaminyl-1-phospho)-alpha-D-mannosyl-(1-&gt;2)-alpha-D-mannosyl-(glycan)]-L-asparaginyl-[protein] + H2O = N(4)-[6-phospho-alpha-D-mannosyl-(1-&gt;2)-alpha-D-mannosyl-(glycan)]-L-asparaginyl-[protein] + N-acetyl-D-glucosamine + H(+). It participates in protein modification; protein glycosylation. Functionally, catalyzes the second step in the formation of the mannose 6-phosphate targeting signal on lysosomal enzyme oligosaccharides by removing GlcNAc residues from GlcNAc-alpha-P-mannose moieties, which are formed in the first step. Also hydrolyzes UDP-GlcNAc, a sugar donor for Golgi N-acetylglucosaminyltransferases. This Homo sapiens (Human) protein is N-acetylglucosamine-1-phosphodiester alpha-N-acetylglucosaminidase (NAGPA).